A 707-amino-acid chain; its full sequence is NADP(+)-dependent formate dehydrogenase subunit beta (707 aa).

Heterotetramer composed of two alpha (FdhA) and two beta (FdhB) subunits.

It is found in the cytoplasm. The catalysed reaction is formate + NADP(+) = CO2 + NADPH. Activity is very sensitive to oxygen. The activity in growing cells is enhanced when selenite and molybdate are added together to the growth medium. Tungstate replaces and is better than molybdate. Selenite is incorporated into the enzyme. Requires a sulfhydryl compound for activity. Inhibited by cyanide, EDTA, hypophosphite and mercaptoethanol. Sulfite inhibits the activity with NADP but not with methyl viologen as electron acceptor. Its function is as follows. Component of a dehydrogenase that catalyzes the NADP-dependent reduction of CO(2) to formate, the first step in the synthesis of the methyl group of acetate during synthesis of acetate from CO(2). In vitro, can use methyl viologen and benzyl viologen in addition to its natural electron acceptor. This is NADP(+)-dependent formate dehydrogenase subunit beta from Moorella thermoacetica (Clostridium thermoaceticum).